Here is a 214-residue protein sequence, read N- to C-terminus: Probable transaldolase (214 aa).

K83 functions as the Schiff-base intermediate with substrate in the catalytic mechanism.

This sequence belongs to the transaldolase family. Type 3B subfamily.

The protein resides in the cytoplasm. It carries out the reaction D-sedoheptulose 7-phosphate + D-glyceraldehyde 3-phosphate = D-erythrose 4-phosphate + beta-D-fructose 6-phosphate. The protein operates within carbohydrate degradation; pentose phosphate pathway; D-glyceraldehyde 3-phosphate and beta-D-fructose 6-phosphate from D-ribose 5-phosphate and D-xylulose 5-phosphate (non-oxidative stage): step 2/3. In terms of biological role, transaldolase is important for the balance of metabolites in the pentose-phosphate pathway. This chain is Probable transaldolase, found in Leptospira biflexa serovar Patoc (strain Patoc 1 / Ames).